The sequence spans 436 residues: Histidine--tRNA ligase (436 aa).

The protein belongs to the class-II aminoacyl-tRNA synthetase family. In terms of assembly, homodimer.

It localises to the cytoplasm. It catalyses the reaction tRNA(His) + L-histidine + ATP = L-histidyl-tRNA(His) + AMP + diphosphate + H(+). The chain is Histidine--tRNA ligase from Prochlorococcus marinus (strain MIT 9303).